The primary structure comprises 473 residues: FAD-dependent monooxygeanse terM (473 aa).

A signal peptide spans 1–22 (MSENFKVLIIGGSVAGLTLALC). FAD contacts are provided by Glu-34, Gly-48, Arg-107, Asp-303, and Ala-316. Residues 441–461 (VLYLICGALLAWWASGLVWHF) form a helical membrane-spanning segment.

It belongs to the paxM FAD-dependent monooxygenase family. Requires FAD as cofactor.

Its subcellular location is the membrane. It functions in the pathway secondary metabolite biosynthesis. In terms of biological role, FAD-dependent monooxygeanse; part of the gene cluster that mediates the biosynthesis of terpendoles, indole-diterpene (IDT) mycotoxins including terpendole I, terpendole K, terpendole C, as well as the kinesin Eg5 inhibitor terpendole E. Terpendoles biosynthesis begins with the synthesis of geranylgeranyl diphosphate (GGPP) by a yet unidentified GGPP synthase. Condensation of indole-3-glycerol phosphate with GGPP by the prenyltransferase terC then forms 3-geranylgeranylindole (3-GGI), followed by epoxidation and cyclization of this intermediate (by the FAD-dependent monooxygeanse terM and the terpene cyclase terB) to form paspaline. The cytochrome monooxygenase terQ then hydroxylates paspalline at C-11 to yield terpendole E. The cytochrome monooxygenase terP converts terpendole E to 13-desoxyterpendole I, and terQ converts 13-desoxyterpendole I into terpendole I. TerF and terK are required for conversion of terpendole I to terpendole C which is further converted to terpendole K. In Tolypocladium album (Soil fungus), this protein is FAD-dependent monooxygeanse terM.